The following is a 121-amino-acid chain: Small ribosomal subunit protein uS13 (121 aa).

The segment at 91 to 121 (HRRGLPVRGQNTKNNARTRKGPRKTVANKKK) is disordered. Over residues 106–121 (ARTRKGPRKTVANKKK) the composition is skewed to basic residues.

It belongs to the universal ribosomal protein uS13 family. As to quaternary structure, part of the 30S ribosomal subunit. Forms a loose heterodimer with protein S19. Forms two bridges to the 50S subunit in the 70S ribosome.

Its function is as follows. Located at the top of the head of the 30S subunit, it contacts several helices of the 16S rRNA. In the 70S ribosome it contacts the 23S rRNA (bridge B1a) and protein L5 of the 50S subunit (bridge B1b), connecting the 2 subunits; these bridges are implicated in subunit movement. Contacts the tRNAs in the A and P-sites. The protein is Small ribosomal subunit protein uS13 of Lysinibacillus sphaericus (strain C3-41).